The sequence spans 753 residues: Bile salt-activated lipase (753 aa).

An N-terminal signal peptide occupies residues 1 to 20; sequence MGRLQLVVLGLTCCWAVASA. The heparin-binding stretch occupies residues 21 to 121; the sequence is AKLGAVYTEG…KQVSRDLPVM (101 aa). C84 and C100 are joined by a disulfide. The N-linked (GlcNAc...) (complex) asparagine glycan is linked to N207. The Acyl-ester intermediate role is filled by S214. C266 and C277 are oxidised to a cystine. Active-site charge relay system residues include D340 and H455. The tract at residues 555–753 is disordered; it reads QEATPVPPTG…EAQMPAVIRF (199 aa). T558, T569, and T579 each carry an O-linked (GalNAc...) threonine glycan. Repeat copies occupy residues 559–569, 570–580, 581–591, 592–602, 603–613, 614–624, 625–635, 636–646, 647–657, 658–668, 669–679, 680–690, 691–701, 702–712, 713–723, 724–734, and 735–745. A 17 X 11 AA tandem repeats, glycodomain, O-linked (mucin type) region spans residues 559-745; sequence PVPPTGDSEA…VPPTDDSKEA (187 aa). 7 O-linked (GalNAc...) threonine glycosylation sites follow: T607, T618, T629, T640, T651, T662, and T673. Positions 668–683 are enriched in pro residues; it reads PPVPPTGDAGPPPVPP.

It belongs to the type-B carboxylesterase/lipase family. In terms of assembly, interacts with CLC. N- and O-glycosylated. In terms of tissue distribution, mammary gland and pancreas. Detected in pancreatic and duodenal juice (at protein level). Expressed by eosinophils.

It is found in the secreted. The enzyme catalyses a triacylglycerol + H2O = a diacylglycerol + a fatty acid + H(+). It catalyses the reaction 1,2,3-tri-(9Z-octadecenoyl)-glycerol + H2O = di-(9Z)-octadecenoylglycerol + (9Z)-octadecenoate + H(+). It carries out the reaction 1,2,3-trioctanoylglycerol + H2O = dioctanoylglycerol + octanoate + H(+). The catalysed reaction is a sterol ester + H2O = a sterol + a fatty acid + H(+). The enzyme catalyses cholesteryl (9Z-octadecenoate) + H2O = cholesterol + (9Z)-octadecenoate + H(+). It catalyses the reaction an acetyl ester + H2O = an aliphatic alcohol + acetate + H(+). It carries out the reaction a butanoate ester + H2O = an aliphatic alcohol + butanoate + H(+). The catalysed reaction is 9-hexadecanoyloxy-octadecanoate + H2O = 9-hydroxy-octadecanoate + hexadecanoate + H(+). The enzyme catalyses 9-(9Z-octadecenoyloxy)-octadecanoate + H2O = 9-hydroxy-octadecanoate + (9Z)-octadecenoate + H(+). It catalyses the reaction 1-hexadecanoyl-sn-glycero-3-phosphocholine + H2O = sn-glycerol 3-phosphocholine + hexadecanoate + H(+). It carries out the reaction 12-hexadecanoyloxy-octadecanoate + H2O = 12-hydroxyoctadecanoate + hexadecanoate + H(+). The catalysed reaction is 12-(9Z-octadecenoyloxy)-octadecanoate + H2O = 12-hydroxyoctadecanoate + (9Z)-octadecenoate + H(+). The enzyme catalyses 13-(9Z-octadecenoyloxy)-octadecanoate + H2O = 13-hydroxy-octadecanoate + (9Z)-octadecenoate + H(+). It catalyses the reaction 9-(9Z-hexadecenoyloxy)-octadecanoate + H2O = (9Z)-hexadecenoate + 9-hydroxy-octadecanoate + H(+). It carries out the reaction 12-(9Z-hexadecenoyloxy)-octadecanoate + H2O = 12-hydroxyoctadecanoate + (9Z)-hexadecenoate + H(+). The catalysed reaction is 13-(9Z-hexadecenoyloxy)-octadecanoate + H2O = 13-hydroxy-octadecanoate + (9Z)-hexadecenoate + H(+). The enzyme catalyses 12-octadecanoyloxy-octadecanoate + H2O = 12-hydroxyoctadecanoate + octadecanoate + H(+). It catalyses the reaction 13-octadecanoyloxy-octadecanoate + H2O = 13-hydroxy-octadecanoate + octadecanoate + H(+). It carries out the reaction 5-(9Z-hexadecenoyloxy)-octadecanoate + H2O = 5-hydroxy-octadecanoate + (9Z)-hexadecenoate + H(+). The catalysed reaction is 9-octadecanoyloxy-octadecanoate + H2O = 9-hydroxy-octadecanoate + octadecanoate + H(+). Activated by bile salts such as sodium taurocholate. Catalyzes the hydrolysis of a wide range of substrates including cholesteryl esters, phospholipids, lysophospholipids, di- and tri-acylglycerols, and fatty acid esters of hydroxy fatty acids (FAHFAs). Preferentially hydrolyzes FAHFAs with the ester bond further away from the carboxylate. Unsaturated FAHFAs are hydrolyzed more quickly than saturated FAHFAs. Has an essential role in the complete digestion of dietary lipids and their intestinal absorption, along with the absorption of fat-soluble vitamins. The chain is Bile salt-activated lipase (CEL) from Homo sapiens (Human).